The sequence spans 303 residues: Recombination-associated protein RdgC (303 aa).

The protein belongs to the RdgC family.

Its subcellular location is the cytoplasm. The protein resides in the nucleoid. May be involved in recombination. The polypeptide is Recombination-associated protein RdgC (Enterobacter sp. (strain 638)).